Reading from the N-terminus, the 943-residue chain is Translation initiation factor IF-2 (943 aa).

Residues 29–357 (LSVKSHSSSV…KPVTERKFHE (329 aa)) are disordered. Basic and acidic residues-rich tracts occupy residues 69 to 82 (PKEE…DKAS), 112 to 137 (FKAE…DNRN), 145 to 155 (QGKRHNNDRRN), 163 to 196 (DHNK…RDNA), and 224 to 253 (RQSE…EKQQ). Residues 254-266 (AEVAVQKAAAETK) are compositionally biased toward low complexity. The segment covering 296-309 (KSRDNRRVNEDGPK) has biased composition (basic and acidic residues). Residues 313–332 (NNKWNNQNQVRNQRNSNWNK) show a composition bias toward low complexity. Positions 445–614 (ERAPVVTIMG…LLVAEVEELK (170 aa)) constitute a tr-type G domain. The interval 454–461 (GHVDHGKT) is G1. 454-461 (GHVDHGKT) is a binding site for GTP. The G2 stretch occupies residues 479-483 (GITQH). Positions 500–503 (DTPG) are G3. GTP contacts are provided by residues 500–504 (DTPGH) and 554–557 (NKID). Residues 554-557 (NKID) are G4. A G5 region spans residues 590 to 592 (SAK).

The protein belongs to the TRAFAC class translation factor GTPase superfamily. Classic translation factor GTPase family. IF-2 subfamily.

The protein resides in the cytoplasm. Functionally, one of the essential components for the initiation of protein synthesis. Protects formylmethionyl-tRNA from spontaneous hydrolysis and promotes its binding to the 30S ribosomal subunits. Also involved in the hydrolysis of GTP during the formation of the 70S ribosomal complex. This chain is Translation initiation factor IF-2, found in Streptococcus thermophilus (strain CNRZ 1066).